Here is a 367-residue protein sequence, read N- to C-terminus: 3-isopropylmalate dehydrogenase (367 aa).

80-93 is an NAD(+) binding site; that stretch reads GKEWTHLPADEQPE. Substrate-binding residues include arginine 101, arginine 111, arginine 140, and aspartate 230. The Mg(2+) site is built by aspartate 230, aspartate 254, and aspartate 258. Position 288 to 300 (288 to 300) interacts with NAD(+); sequence GSAPDLKGKNIAN.

It belongs to the isocitrate and isopropylmalate dehydrogenases family. LeuB type 1 subfamily. As to quaternary structure, homodimer. The cofactor is Mg(2+). It depends on Mn(2+) as a cofactor.

The protein localises to the cytoplasm. The enzyme catalyses (2R,3S)-3-isopropylmalate + NAD(+) = 4-methyl-2-oxopentanoate + CO2 + NADH. It functions in the pathway amino-acid biosynthesis; L-leucine biosynthesis; L-leucine from 3-methyl-2-oxobutanoate: step 3/4. Its function is as follows. Catalyzes the oxidation of 3-carboxy-2-hydroxy-4-methylpentanoate (3-isopropylmalate) to 3-carboxy-4-methyl-2-oxopentanoate. The product decarboxylates to 4-methyl-2 oxopentanoate. This chain is 3-isopropylmalate dehydrogenase (leuB), found in Buchnera aphidicola subsp. Cinara cedri (strain Cc).